The following is a 225-amino-acid chain: 7-cyano-7-deazaguanine synthase (225 aa).

9–19 serves as a coordination point for ATP; sequence YSGGLDSTTCL. C188, C198, C201, and C204 together coordinate Zn(2+).

The protein belongs to the QueC family. The cofactor is Zn(2+).

The enzyme catalyses 7-carboxy-7-deazaguanine + NH4(+) + ATP = 7-cyano-7-deazaguanine + ADP + phosphate + H2O + H(+). It functions in the pathway purine metabolism; 7-cyano-7-deazaguanine biosynthesis. In terms of biological role, catalyzes the ATP-dependent conversion of 7-carboxy-7-deazaguanine (CDG) to 7-cyano-7-deazaguanine (preQ(0)). The protein is 7-cyano-7-deazaguanine synthase of Citrifermentans bemidjiense (strain ATCC BAA-1014 / DSM 16622 / JCM 12645 / Bem) (Geobacter bemidjiensis).